We begin with the raw amino-acid sequence, 777 residues long: DNA ligase (777 aa).

NAD(+)-binding positions include 35-39 (DAEYD), 84-85 (SL), and E116. K118 (N6-AMP-lysine intermediate) is an active-site residue. Positions 139, 176, 293, and 317 each coordinate NAD(+). C411, C414, C429, and C435 together coordinate Zn(2+). One can recognise a BRCT domain in the interval 691-777 (MESQPLEGQT…NQHGIDPGAL (87 aa)).

The protein belongs to the NAD-dependent DNA ligase family. LigA subfamily. Mg(2+) is required as a cofactor. Mn(2+) serves as cofactor.

The enzyme catalyses NAD(+) + (deoxyribonucleotide)n-3'-hydroxyl + 5'-phospho-(deoxyribonucleotide)m = (deoxyribonucleotide)n+m + AMP + beta-nicotinamide D-nucleotide.. DNA ligase that catalyzes the formation of phosphodiester linkages between 5'-phosphoryl and 3'-hydroxyl groups in double-stranded DNA using NAD as a coenzyme and as the energy source for the reaction. It is essential for DNA replication and repair of damaged DNA. The sequence is that of DNA ligase from Alcanivorax borkumensis (strain ATCC 700651 / DSM 11573 / NCIMB 13689 / SK2).